The following is a 778-amino-acid chain: Probable potassium transporter 13 (778 aa).

Residues 1-28 lie on the Cytoplasmic side of the membrane; the sequence is MDVEGGGGGGGGAPPRGRNSWGWQKGTL. The helical transmembrane segment at 29 to 49 threads the bilayer; it reads LLAYQSFGVVYGDLCISPVYV. The Extracellular portion of the chain corresponds to 50–72; the sequence is YKNTFSGKLRLHEEDEEILGVLS. A helical membrane pass occupies residues 73 to 93; sequence LVFWSLTLIPLLKYIILVLGA. Residues 94-156 are Cytoplasmic-facing; sequence DDNGEGGTFA…AFFEKHYSLR (63 aa). A helical membrane pass occupies residues 157–177; sequence VVLLLFVLMGTSMVIGDGVLT. At 178-199 the chain is on the extracellular side; that stretch reads PTMSVLAAVSGLRIKFPELHEN. N199 carries N-linked (GlcNAc...) asparagine glycosylation. The helical transmembrane segment at 200–220 threads the bilayer; sequence YTVLLACVILIGLFALQHYGT. Over 221–222 the chain is Cytoplasmic; that stretch reads RR. The helical transmembrane segment at 223–243 threads the bilayer; it reads VGFLFAPILISWLTCIGGIGI. Over 244–276 the chain is Extracellular; sequence YNIIKWNPSVIRALSPYYIYNFFRKAGKDGWSS. A helical membrane pass occupies residues 277–297; sequence LGGIVLCLTGAEAMFADLGHF. Topologically, residues 298–303 are cytoplasmic; it reads SKLSLR. A helical membrane pass occupies residues 304–324; the sequence is LGFTIVVYPCLVLAYMGEAAY. The Extracellular segment spans residues 325 to 343; the sequence is LSKHREDLQSSFYKALPDR. The helical transmembrane segment at 344–364 threads the bilayer; sequence VFWPVLFIATLATAVGSQAII. The Cytoplasmic segment spans residues 365–395; it reads SATFSIISQCRALGCFPRIKVVHTSSHVHGQ. Residues 396–416 form a helical membrane-spanning segment; the sequence is IYIPEVNWVLMSLCLAVTIGF. At 417 to 424 the chain is on the extracellular side; the sequence is RDTEMIGN. A helical transmembrane segment spans residues 425–445; it reads AYGLAVILVMCATTCLMFLVI. The Cytoplasmic portion of the chain corresponds to 446 to 451; that stretch reads TTVWNR. Residues 452-472 traverse the membrane as a helical segment; sequence WVVWAAAFTVVFGSVELLYLS. At 473-477 the chain is on the extracellular side; it reads ACLAK. The chain crosses the membrane as a helical span at residues 478-498; the sequence is VPHGGWLPLLLSLTTLLVMST. Topologically, residues 499 to 778 are cytoplasmic; sequence WHYGTAMKQQ…LIEVGMAYRV (280 aa). The segment covering 655–677 has biased composition (polar residues); sequence PATSSSGGSNQHAFDAGTTTSSC. Positions 655–704 are disordered; sequence PATSSSGGSNQHAFDAGTTTSSCEIDATAGGGGRRKVRFDNDGGGGGEEE.

It belongs to the HAK/KUP transporter (TC 2.A.72.3) family.

The protein resides in the membrane. Its function is as follows. High-affinity potassium transporter. In Oryza sativa subsp. japonica (Rice), this protein is Probable potassium transporter 13 (HAK13).